We begin with the raw amino-acid sequence, 64 residues long: Conotoxin Im11.4 (64 aa).

The first 26 residues, 1–26, serve as a signal peptide directing secretion; sequence MMFRLTSVSCILLVIAFLNLVGLTNA. 4 disulfides stabilise this stretch: Cys27/Cys41, Cys34/Cys46, Cys40/Cys50, and Cys45/Cys54. His57 carries the post-translational modification Histidine amide. Residues 61–64 constitute a propeptide that is removed on maturation; it reads ATFQ.

Belongs to the conotoxin I2 superfamily. In terms of tissue distribution, expressed by the venom duct.

The protein localises to the secreted. This chain is Conotoxin Im11.4, found in Conus imperialis (Imperial cone).